The following is a 346-amino-acid chain: NADH-quinone oxidoreductase subunit H 2 (346 aa).

The next 8 helical transmembrane spans lie at 14 to 34, 83 to 103, 136 to 156, 172 to 192, 208 to 228, 260 to 280, 289 to 309, and 324 to 344; these read IAMV…VAYA, FAFL…FAVI, VGVL…VLAG, SAQM…VFML, GAWY…CSIA, FFMA…TLFL, LPGW…CMWI, and LGWK…GIIV.

The protein belongs to the complex I subunit 1 family. As to quaternary structure, NDH-1 is composed of 14 different subunits. Subunits NuoA, H, J, K, L, M, N constitute the membrane sector of the complex.

It is found in the cell inner membrane. It catalyses the reaction a quinone + NADH + 5 H(+)(in) = a quinol + NAD(+) + 4 H(+)(out). In terms of biological role, NDH-1 shuttles electrons from NADH, via FMN and iron-sulfur (Fe-S) centers, to quinones in the respiratory chain. The immediate electron acceptor for the enzyme in this species is believed to be ubiquinone. Couples the redox reaction to proton translocation (for every two electrons transferred, four hydrogen ions are translocated across the cytoplasmic membrane), and thus conserves the redox energy in a proton gradient. This subunit may bind ubiquinone. The polypeptide is NADH-quinone oxidoreductase subunit H 2 (Geobacter metallireducens (strain ATCC 53774 / DSM 7210 / GS-15)).